The sequence spans 313 residues: Aspartate carbamoyltransferase catalytic subunit (313 aa).

Carbamoyl phosphate is bound by residues Arg59 and Thr60. Lys87 is an L-aspartate binding site. Positions 109, 137, and 140 each coordinate carbamoyl phosphate. The L-aspartate site is built by Arg170 and Arg224. Gly265 and Pro266 together coordinate carbamoyl phosphate.

The protein belongs to the aspartate/ornithine carbamoyltransferase superfamily. ATCase family. In terms of assembly, heterododecamer (2C3:3R2) of six catalytic PyrB chains organized as two trimers (C3), and six regulatory PyrI chains organized as three dimers (R2).

It catalyses the reaction carbamoyl phosphate + L-aspartate = N-carbamoyl-L-aspartate + phosphate + H(+). It participates in pyrimidine metabolism; UMP biosynthesis via de novo pathway; (S)-dihydroorotate from bicarbonate: step 2/3. Its function is as follows. Catalyzes the condensation of carbamoyl phosphate and aspartate to form carbamoyl aspartate and inorganic phosphate, the committed step in the de novo pyrimidine nucleotide biosynthesis pathway. This Rhizobium meliloti (strain 1021) (Ensifer meliloti) protein is Aspartate carbamoyltransferase catalytic subunit.